A 200-amino-acid polypeptide reads, in one-letter code: Dephospho-CoA kinase (200 aa).

One can recognise a DPCK domain in the interval Val-3–Ser-200. Gly-11–Ser-16 is a binding site for ATP.

Belongs to the CoaE family.

It localises to the cytoplasm. It catalyses the reaction 3'-dephospho-CoA + ATP = ADP + CoA + H(+). It participates in cofactor biosynthesis; coenzyme A biosynthesis; CoA from (R)-pantothenate: step 5/5. In terms of biological role, catalyzes the phosphorylation of the 3'-hydroxyl group of dephosphocoenzyme A to form coenzyme A. In Nitrosospira multiformis (strain ATCC 25196 / NCIMB 11849 / C 71), this protein is Dephospho-CoA kinase.